Reading from the N-terminus, the 223-residue chain is Probable GTP-binding protein EngB (223 aa).

Positions 25-199 (TGVEIAFAGR…SRLLQDWFDE (175 aa)) constitute an EngB-type G domain. GTP-binding positions include 33-40 (GRSNAGKS), 60-64 (GRTQH), 78-81 (DLPG), 145-148 (TKAD), and 178-180 (FSS). The Mg(2+) site is built by Ser-40 and Thr-62.

The protein belongs to the TRAFAC class TrmE-Era-EngA-EngB-Septin-like GTPase superfamily. EngB GTPase family. Mg(2+) is required as a cofactor.

In terms of biological role, necessary for normal cell division and for the maintenance of normal septation. In Nitrosomonas eutropha (strain DSM 101675 / C91 / Nm57), this protein is Probable GTP-binding protein EngB.